The sequence spans 441 residues: Methylenetetrahydrofolate--tRNA-(uracil-5-)-methyltransferase TrmFO (441 aa).

An FAD-binding site is contributed by 11-16; the sequence is GGGLAG.

Belongs to the MnmG family. TrmFO subfamily. It depends on FAD as a cofactor.

Its subcellular location is the cytoplasm. It carries out the reaction uridine(54) in tRNA + (6R)-5,10-methylene-5,6,7,8-tetrahydrofolate + NADH + H(+) = 5-methyluridine(54) in tRNA + (6S)-5,6,7,8-tetrahydrofolate + NAD(+). It catalyses the reaction uridine(54) in tRNA + (6R)-5,10-methylene-5,6,7,8-tetrahydrofolate + NADPH + H(+) = 5-methyluridine(54) in tRNA + (6S)-5,6,7,8-tetrahydrofolate + NADP(+). Catalyzes the folate-dependent formation of 5-methyl-uridine at position 54 (M-5-U54) in all tRNAs. The protein is Methylenetetrahydrofolate--tRNA-(uracil-5-)-methyltransferase TrmFO of Syntrophus aciditrophicus (strain SB).